The following is a 354-amino-acid chain: Holliday junction branch migration complex subunit RuvB (354 aa).

Positions 4–190 (TDKLAAERII…FGIVARLEFY (187 aa)) are large ATPase domain (RuvB-L). Residues Leu29, Arg30, Gly71, Lys74, Thr75, Thr76, 137 to 139 (EDY), Arg180, Tyr190, and Arg227 contribute to the ATP site. Thr75 contributes to the Mg(2+) binding site. The small ATPAse domain (RuvB-S) stretch occupies residues 191 to 261 (DADQLARIVR…VADAALAMLD (71 aa)). The segment at 264–354 (PVGFDLMDRK…RGMWDTPAGK (91 aa)) is head domain (RuvB-H). Positions 300, 319, and 324 each coordinate DNA.

Belongs to the RuvB family. In terms of assembly, homohexamer. Forms an RuvA(8)-RuvB(12)-Holliday junction (HJ) complex. HJ DNA is sandwiched between 2 RuvA tetramers; dsDNA enters through RuvA and exits via RuvB. An RuvB hexamer assembles on each DNA strand where it exits the tetramer. Each RuvB hexamer is contacted by two RuvA subunits (via domain III) on 2 adjacent RuvB subunits; this complex drives branch migration. In the full resolvosome a probable DNA-RuvA(4)-RuvB(12)-RuvC(2) complex forms which resolves the HJ.

The protein localises to the cytoplasm. The catalysed reaction is ATP + H2O = ADP + phosphate + H(+). Functionally, the RuvA-RuvB-RuvC complex processes Holliday junction (HJ) DNA during genetic recombination and DNA repair, while the RuvA-RuvB complex plays an important role in the rescue of blocked DNA replication forks via replication fork reversal (RFR). RuvA specifically binds to HJ cruciform DNA, conferring on it an open structure. The RuvB hexamer acts as an ATP-dependent pump, pulling dsDNA into and through the RuvAB complex. RuvB forms 2 homohexamers on either side of HJ DNA bound by 1 or 2 RuvA tetramers; 4 subunits per hexamer contact DNA at a time. Coordinated motions by a converter formed by DNA-disengaged RuvB subunits stimulates ATP hydrolysis and nucleotide exchange. Immobilization of the converter enables RuvB to convert the ATP-contained energy into a lever motion, pulling 2 nucleotides of DNA out of the RuvA tetramer per ATP hydrolyzed, thus driving DNA branch migration. The RuvB motors rotate together with the DNA substrate, which together with the progressing nucleotide cycle form the mechanistic basis for DNA recombination by continuous HJ branch migration. Branch migration allows RuvC to scan DNA until it finds its consensus sequence, where it cleaves and resolves cruciform DNA. In Burkholderia ambifaria (strain MC40-6), this protein is Holliday junction branch migration complex subunit RuvB.